The chain runs to 334 residues: GTP 3',8-cyclase (334 aa).

The Radical SAM core domain occupies 11–235; sequence GFNRKVDYLR…VESAESSQGP (225 aa). A GTP-binding site is contributed by Arg-20. Residues Cys-27 and Cys-31 each coordinate [4Fe-4S] cluster. An S-adenosyl-L-methionine-binding site is contributed by Tyr-33. Residue Cys-34 coordinates [4Fe-4S] cluster. Arg-69 contacts GTP. Gly-73 lines the S-adenosyl-L-methionine pocket. Thr-100 serves as a coordination point for GTP. Ser-124 contributes to the S-adenosyl-L-methionine binding site. Lys-161 is a binding site for GTP. Residue Met-195 participates in S-adenosyl-L-methionine binding. [4Fe-4S] cluster-binding residues include Cys-260 and Cys-263. GTP is bound at residue 265–267; that stretch reads RVR. Position 277 (Cys-277) interacts with [4Fe-4S] cluster.

It belongs to the radical SAM superfamily. MoaA family. As to quaternary structure, monomer and homodimer. The cofactor is [4Fe-4S] cluster.

The enzyme catalyses GTP + AH2 + S-adenosyl-L-methionine = (8S)-3',8-cyclo-7,8-dihydroguanosine 5'-triphosphate + 5'-deoxyadenosine + L-methionine + A + H(+). It functions in the pathway cofactor biosynthesis; molybdopterin biosynthesis. Catalyzes the cyclization of GTP to (8S)-3',8-cyclo-7,8-dihydroguanosine 5'-triphosphate. This Pseudomonas entomophila (strain L48) protein is GTP 3',8-cyclase.